A 483-amino-acid chain; its full sequence is NADH-quinone oxidoreductase subunit N (483 aa).

Helical transmembrane passes span 13-33 (PALP…YGVF), 45-65 (GALA…NAYV), 80-100 (FMKL…LTFI), 111-131 (PVLI…NGLI), 165-185 (FVLG…IYGF), 205-225 (IGVI…ISAV), 244-264 (AFFA…VLFV), 276-296 (IIVF…IGQS), 301-321 (LMAY…AAGT), 328-348 (VLIY…CILA), 373-393 (AFMM…AGFF), 407-429 (LYPL…LRIV), and 452-472 (VLGI…PLIL).

The protein belongs to the complex I subunit 2 family. NDH-1 is composed of 14 different subunits. Subunits NuoA, H, J, K, L, M, N constitute the membrane sector of the complex.

It is found in the cell inner membrane. It catalyses the reaction a quinone + NADH + 5 H(+)(in) = a quinol + NAD(+) + 4 H(+)(out). Functionally, NDH-1 shuttles electrons from NADH, via FMN and iron-sulfur (Fe-S) centers, to quinones in the respiratory chain. The immediate electron acceptor for the enzyme in this species is believed to be ubiquinone. Couples the redox reaction to proton translocation (for every two electrons transferred, four hydrogen ions are translocated across the cytoplasmic membrane), and thus conserves the redox energy in a proton gradient. In Parvibaculum lavamentivorans (strain DS-1 / DSM 13023 / NCIMB 13966), this protein is NADH-quinone oxidoreductase subunit N.